We begin with the raw amino-acid sequence, 244 residues long: PF03932 family protein CutC (244 aa).

It belongs to the CutC family.

The protein localises to the cytoplasm. The chain is PF03932 family protein CutC from Pasteurella multocida (strain Pm70).